We begin with the raw amino-acid sequence, 319 residues long: Pantothenate kinase (319 aa).

Residue 101-108 participates in ATP binding; the sequence is GSVAVGKS.

Belongs to the prokaryotic pantothenate kinase family.

It localises to the cytoplasm. The enzyme catalyses (R)-pantothenate + ATP = (R)-4'-phosphopantothenate + ADP + H(+). It functions in the pathway cofactor biosynthesis; coenzyme A biosynthesis; CoA from (R)-pantothenate: step 1/5. In Clavibacter michiganensis subsp. michiganensis (strain NCPPB 382), this protein is Pantothenate kinase.